We begin with the raw amino-acid sequence, 189 residues long: MSETELEKIKVRTAEHLENDKNNISWLKEDTQLTNAKHADEKPINAIVINSVSDFNITDGPAKENPNEKKLSESSTSLSSLEECQTTFSYLQTDTSVHHRDTDEECASLILACLFCQFWDCLLMLPGTCETVCTKMCCPSRRYHHTSDENHSRNDCSCNCDMDCSLFESCHETSECLELAMEISEICYR.

One can recognise an MDFI domain in the interval 28-188 (KEDTQLTNAK…LAMEISEICY (161 aa)).

The protein belongs to the MDFI family.

The polypeptide is MyoD family inhibitor domain-containing protein 2 (Homo sapiens (Human)).